The primary structure comprises 229 residues: PKHD-type hydroxylase OCAR_6723/OCA5_c13470 (229 aa).

The Fe2OG dioxygenase domain maps to 78 to 180 (HIFPPLFNRY…RVASFFWLQS (103 aa)). Positions 98, 100, and 161 each coordinate Fe cation. Arg-171 contacts 2-oxoglutarate.

It depends on Fe(2+) as a cofactor. L-ascorbate is required as a cofactor.

This is PKHD-type hydroxylase OCAR_6723/OCA5_c13470 from Afipia carboxidovorans (strain ATCC 49405 / DSM 1227 / KCTC 32145 / OM5) (Oligotropha carboxidovorans).